A 231-amino-acid chain; its full sequence is Cytochrome c oxidase assembly factor 7 (231 aa).

A2 carries the N-acetylalanine modification. Sel1-like repeat units follow at residues 34-66 (PDGC…EENQ), 68-104 (SDSC…EKPG), 108-146 (IAAC…DGGY), 147-183 (TSSC…DLGH), and 184-219 (IWAC…QLHK).

This sequence belongs to the hcp beta-lactamase family. As to quaternary structure, interacts with CHCHD4/MIA40 through transient intermolecular disulfide bonds.

It is found in the mitochondrion intermembrane space. Required for assembly of mitochondrial respiratory chain complex I and complex IV. The chain is Cytochrome c oxidase assembly factor 7 (COA7) from Homo sapiens (Human).